Consider the following 55-residue polypeptide: Large ribosomal subunit protein bL33 (55 aa).

It belongs to the bacterial ribosomal protein bL33 family.

The sequence is that of Large ribosomal subunit protein bL33 from Aromatoleum aromaticum (strain DSM 19018 / LMG 30748 / EbN1) (Azoarcus sp. (strain EbN1)).